Consider the following 483-residue polypeptide: Cysteine proteinase 1, mitochondrial (483 aa).

A mitochondrion-targeting transit peptide spans Met-1–Met-30. Residues Cys-102, His-398, and Asn-421 contribute to the active site. Lys-483 is a propeptide (removed in mature form; by autocatalysis).

The protein belongs to the peptidase C1 family. As to quaternary structure, homohexamer. Binds to nucleic acids. Binds single-stranded DNA and RNA with higher affinity than double-stranded DNA. Post-translationally, the N-terminus of isoform Cytoplasmic is blocked.

The protein localises to the mitochondrion. It localises to the cytoplasm. It catalyses the reaction Inactivates bleomycin B2 (a cytotoxic glycometallopeptide) by hydrolysis of a carboxyamide bond of beta-aminoalanine, but also shows general aminopeptidase activity. The specificity varies somewhat with source, but amino acid arylamides of Met, Leu and Ala are preferred.. Inhibited by E64, a specific inhibitor of cysteine proteases, N-ethylmaleimide, iodacetamide, and mercury and zinc ions. Its function is as follows. The normal physiological role of the enzyme is unknown, but it is not essential for the viability of yeast cells. Has aminopeptidase activity, shortening substrate peptides sequentially by 1 amino acid. Has bleomycin hydrolase activity, which can protect the cell from the toxic effects of bleomycin. Has homocysteine-thiolactonase activity, protecting the cell against homocysteine toxicity. Acts as a repressor in the GAL4 regulatory system, but this does not require either the peptidase or nucleic acid-binding activities. This Saccharomyces cerevisiae (strain YJM789) (Baker's yeast) protein is Cysteine proteinase 1, mitochondrial (LAP3).